A 905-amino-acid polypeptide reads, in one-letter code: DNA mismatch repair protein MutS (905 aa).

The segment at 272–292 is disordered; the sequence is KKPPLSPPSREATGSTMAIDP. 654 to 661 contributes to the ATP binding site; it reads GPNMAGKS.

This sequence belongs to the DNA mismatch repair MutS family.

This protein is involved in the repair of mismatches in DNA. It is possible that it carries out the mismatch recognition step. This protein has a weak ATPase activity. The sequence is that of DNA mismatch repair protein MutS from Rhodopseudomonas palustris (strain BisB18).